We begin with the raw amino-acid sequence, 349 residues long: Transmembrane protein 255A (349 aa).

Transmembrane regions (helical) follow at residues 30–50, 57–77, 89–109, and 226–246; these read IYVT…GLAA, VTVG…LGII, LVAS…CAIV, and TILN…LGGF. Residues 303–329 form a disordered region; that stretch reads PSSPPSGLSDEPQSASPSPSYMWSSSA. Low complexity predominate over residues 316 to 329; sequence SASPSPSYMWSSSA.

Belongs to the TMEM255 family.

It is found in the membrane. The polypeptide is Transmembrane protein 255A (TMEM255A) (Homo sapiens (Human)).